Here is a 131-residue protein sequence, read N- to C-terminus: Sperm microtubule inner protein 11 (131 aa).

The tract at residues 18–44 (KKRNTTEETNQKEPEPTRLPPIISKDG) is disordered. Basic and acidic residues predominate over residues 21–33 (NTTEETNQKEPEP).

Microtubule inner protein component of sperm flagellar doublet microtubules.

It localises to the cytoplasm. The protein localises to the cytoskeleton. Its subcellular location is the flagellum axoneme. Functionally, microtubule inner protein (MIP) part of the dynein-decorated doublet microtubules (DMTs) in flagellum axoneme. May serve to reinforce and thus stabilize the microtubule structure in the sperm flagella. In Homo sapiens (Human), this protein is Sperm microtubule inner protein 11.